We begin with the raw amino-acid sequence, 248 residues long: Ribosomal RNA small subunit methyltransferase G (248 aa).

S-adenosyl-L-methionine is bound by residues G93, L98, 143-144 (AE), and R161.

It belongs to the methyltransferase superfamily. RNA methyltransferase RsmG family.

The protein localises to the cytoplasm. Specifically methylates the N7 position of guanine in position 518 of 16S rRNA. This is Ribosomal RNA small subunit methyltransferase G from Mycobacterium leprae (strain Br4923).